The following is an 88-amino-acid chain: UPF0147 protein Ta0600 (88 aa).

The protein belongs to the UPF0147 family.

This is UPF0147 protein Ta0600 from Thermoplasma acidophilum (strain ATCC 25905 / DSM 1728 / JCM 9062 / NBRC 15155 / AMRC-C165).